The sequence spans 366 residues: MSGNTLGTLFTVTTFGESHGPAIGCVIDGCPPGMGLTEADIQVELDRRKPGTSRHVTQRQEADEVEILSGVFEGVTTGTPIALLIRNTDQRSKDYGNIVETFRPGHADYTYWQKYGIRDYRGGGRSSARLTAPIVGAGAVAKKWLRERFGVEVRGYMSCLGDIDVPFVDWSHVRENPFFSPNAAIVPELEAYMDALRKDGDSIGARIDVVASGVPVGWGEPVFDRLDADIAKAMMSINAVKGVEIGAGFDSVAQRGSVHGDELTPAGFIGNHAGGVLGGISTGQDITVSIAIKPTSSIRTPRRSITKAGDEATVETFGRHDPCVGIRATPIAESMLALVLIDHALRHRAQCGDVETSTPKISGSAT.

Residues Arg-48 and Arg-54 each coordinate NADP(+). FMN-binding positions include Arg-125–Ser-127, Asn-238–Ala-239, Gly-278, Lys-293–Ser-297, and Arg-319.

This sequence belongs to the chorismate synthase family. In terms of assembly, homotetramer. Requires FMNH2 as cofactor.

The catalysed reaction is 5-O-(1-carboxyvinyl)-3-phosphoshikimate = chorismate + phosphate. It functions in the pathway metabolic intermediate biosynthesis; chorismate biosynthesis; chorismate from D-erythrose 4-phosphate and phosphoenolpyruvate: step 7/7. Its function is as follows. Catalyzes the anti-1,4-elimination of the C-3 phosphate and the C-6 proR hydrogen from 5-enolpyruvylshikimate-3-phosphate (EPSP) to yield chorismate, which is the branch point compound that serves as the starting substrate for the three terminal pathways of aromatic amino acid biosynthesis. This reaction introduces a second double bond into the aromatic ring system. This Burkholderia ambifaria (strain MC40-6) protein is Chorismate synthase.